A 250-amino-acid polypeptide reads, in one-letter code: Small ribosomal subunit protein uS2 (250 aa).

It belongs to the universal ribosomal protein uS2 family.

The sequence is that of Small ribosomal subunit protein uS2 from Polaromonas naphthalenivorans (strain CJ2).